An 85-amino-acid chain; its full sequence is Cell division protein ZapA (85 aa).

Residues 60 to 85 (AVNVVHDYLKLKEQYEKLEIQLKEKE) adopt a coiled-coil conformation.

This sequence belongs to the ZapA family. Type 2 subfamily. As to quaternary structure, homodimer. Interacts with FtsZ.

It is found in the cytoplasm. Its function is as follows. Activator of cell division through the inhibition of FtsZ GTPase activity, therefore promoting FtsZ assembly into bundles of protofilaments necessary for the formation of the division Z ring. It is recruited early at mid-cell but it is not essential for cell division. In Bacillus pumilus (strain SAFR-032), this protein is Cell division protein ZapA.